The primary structure comprises 185 residues: Small ribosomal subunit protein bS16 (185 aa).

The segment at glutamine 83 to glycine 185 is disordered. The span at asparagine 89 to lysine 125 shows a compositional bias: basic and acidic residues. 2 stretches are compositionally biased toward low complexity: residues alanine 126–proline 146 and valine 159–alanine 176.

It belongs to the bacterial ribosomal protein bS16 family.

This Caulobacter sp. (strain K31) protein is Small ribosomal subunit protein bS16.